We begin with the raw amino-acid sequence, 216 residues long: MYNVIFLGAPGSGKGTQGEVVAKELKLAHMATGDLFRKAIECGDELGDTVKSYMERGELVPDEITISVVLKHLAGLTDVTGIILDGFPRSLRQAEALDEALVQQGQGIGRVIYINVPGDELVRRLSGRWVCRSCQSPYQSGCAEVTKGKCSRCQGGLYQRPDDTPETVKERLKVYFSKTAPLIEYYRSKGKLSEIDGMAEISEVTKRIISAIKCGK.

Residue 11-16 (GSGKGT) coordinates ATP. The segment at 31–60 (ATGDLFRKAIECGDELGDTVKSYMERGELV) is NMP. Residues Thr32, Arg37, 58–60 (ELV), 86–89 (GFPR), and Gln93 contribute to the AMP site. The interval 127 to 163 (GRWVCRSCQSPYQSGCAEVTKGKCSRCQGGLYQRPDD) is LID. Position 128 (Arg128) interacts with ATP. Residues Cys131, Cys134, Cys150, and Cys153 each coordinate Zn(2+). Residues Arg160 and Arg171 each contribute to the AMP site. Residue Ala199 participates in ATP binding.

The protein belongs to the adenylate kinase family. In terms of assembly, monomer.

The protein resides in the cytoplasm. The enzyme catalyses AMP + ATP = 2 ADP. It participates in purine metabolism; AMP biosynthesis via salvage pathway; AMP from ADP: step 1/1. In terms of biological role, catalyzes the reversible transfer of the terminal phosphate group between ATP and AMP. Plays an important role in cellular energy homeostasis and in adenine nucleotide metabolism. This Dehalococcoides mccartyi (strain CBDB1) protein is Adenylate kinase.